The following is a 303-amino-acid chain: Hemolysin E (303 aa).

A disulfide bridge connects residues Cys-87 and Cys-285. The helical transmembrane segment at Ala-179 to Ala-199 threads the bilayer.

Belongs to the hemolysin E family. As to quaternary structure, monomer and oligomer. In periplasm, it is present as a monomer, while in outer membrane vesicles, it oligomerizes to form a pore structure that is active. The pore is formed by a dodecamer. In periplasm, it forms a disulfide bond, which prevents the oligomerization. In outer membrane vesicles, the redox status prevents formation of the disulfide bond, leading to oligomerization and pore formation.

It is found in the secreted. It localises to the periplasm. The protein localises to the host cell membrane. Its function is as follows. Toxin, which has some hemolytic activity towards mammalian cells. Acts by forming a pore-like structure upon contact with mammalian cells. The sequence is that of Hemolysin E (hlyE) from Salmonella paratyphi A (strain ATCC 9150 / SARB42).